The primary structure comprises 160 residues: Serine-protein kinase RsbW (160 aa).

Belongs to the anti-sigma-factor family.

It catalyses the reaction L-seryl-[protein] + ATP = O-phospho-L-seryl-[protein] + ADP + H(+). The enzyme catalyses L-threonyl-[protein] + ATP = O-phospho-L-threonyl-[protein] + ADP + H(+). Functionally, negative regulator of sigma-B activity. Phosphorylates and inactivates its specific antagonist protein, RsbV. Upon phosphorylation of RsbV, RsbW is released and binds to sigma-B, thereby blocking its ability to form an RNA polymerase holoenzyme (E-sigma-B). The sequence is that of Serine-protein kinase RsbW from Bacillus cereus (strain AH187).